We begin with the raw amino-acid sequence, 346 residues long: S-adenosylmethionine:tRNA ribosyltransferase-isomerase (346 aa).

Belongs to the QueA family. As to quaternary structure, monomer.

It is found in the cytoplasm. It catalyses the reaction 7-aminomethyl-7-carbaguanosine(34) in tRNA + S-adenosyl-L-methionine = epoxyqueuosine(34) in tRNA + adenine + L-methionine + 2 H(+). Its pathway is tRNA modification; tRNA-queuosine biosynthesis. Its function is as follows. Transfers and isomerizes the ribose moiety from AdoMet to the 7-aminomethyl group of 7-deazaguanine (preQ1-tRNA) to give epoxyqueuosine (oQ-tRNA). The polypeptide is S-adenosylmethionine:tRNA ribosyltransferase-isomerase (Shewanella frigidimarina (strain NCIMB 400)).